The following is a 1068-amino-acid chain: tRNA wybutosine-synthesizing protein 4 (1068 aa).

The segment at 1 to 31 is disordered; sequence MCPPEQPAKAMAPSKSNQAAKSAVPTKEEKS. S-adenosyl-L-methionine is bound by residues R81, G107, D134, 181–182, and E208; that span reads DL. The region spanning 876–1024 is the JmjC domain; the sequence is ADFPSLSSDF…ALGRDVYGNR (149 aa).

The protein belongs to the methyltransferase superfamily. LCMT family.

The enzyme catalyses 7-[(3S)-3-amino-3-carboxypropyl]wyosine(37) in tRNA(Phe) + S-adenosyl-L-methionine = 7-[(3S)-(3-amino-3-methoxycarbonyl)propyl]wyosine(37) in tRNA(Phe) + S-adenosyl-L-homocysteine. It carries out the reaction 7-[(3S)-(3-amino-3-methoxycarbonyl)propyl]wyosine(37) in tRNA(Phe) + S-adenosyl-L-methionine + CO2 = wybutosine(37) in tRNA(Phe) + S-adenosyl-L-homocysteine + 2 H(+). It participates in tRNA modification; wybutosine-tRNA(Phe) biosynthesis. Functionally, probable S-adenosyl-L-methionine-dependent methyltransferase that acts as a component of the wybutosine biosynthesis pathway. Wybutosine is a hyper modified guanosine with a tricyclic base found at the 3'-position adjacent to the anticodon of eukaryotic phenylalanine tRNA. May methylate the carboxyl group of leucine residues to form alpha-leucine ester residues. The protein is tRNA wybutosine-synthesizing protein 4 (ppm2) of Emericella nidulans (strain FGSC A4 / ATCC 38163 / CBS 112.46 / NRRL 194 / M139) (Aspergillus nidulans).